Consider the following 169-residue polypeptide: ATP synthase subunit b (169 aa).

Residues 12–32 (HIYLGNALWYLICFAILLLLI) traverse the membrane as a helical segment.

The protein belongs to the ATPase B chain family. F-type ATPases have 2 components, F(1) - the catalytic core - and F(0) - the membrane proton channel. F(1) has five subunits: alpha(3), beta(3), gamma(1), delta(1), epsilon(1). F(0) has three main subunits: a(1), b(2) and c(10-14). The alpha and beta chains form an alternating ring which encloses part of the gamma chain. F(1) is attached to F(0) by a central stalk formed by the gamma and epsilon chains, while a peripheral stalk is formed by the delta and b chains.

The protein localises to the cell membrane. Functionally, f(1)F(0) ATP synthase produces ATP from ADP in the presence of a proton or sodium gradient. F-type ATPases consist of two structural domains, F(1) containing the extramembraneous catalytic core and F(0) containing the membrane proton channel, linked together by a central stalk and a peripheral stalk. During catalysis, ATP synthesis in the catalytic domain of F(1) is coupled via a rotary mechanism of the central stalk subunits to proton translocation. Its function is as follows. Component of the F(0) channel, it forms part of the peripheral stalk, linking F(1) to F(0). This chain is ATP synthase subunit b, found in Lactobacillus helveticus (strain DPC 4571).